The chain runs to 240 residues: MATLFIADLHLQTEEPAIVAGFLRFLAVEARQADALYILGDLFEAWIGDDDPNPLHREMAVAIKSLVDSGVPCFFIHGNRDFLIGKRFARESGMILLPQEKVLDLYGRNVLIMHGDTLCTDDAGYQAFRAKVHNPWVQRLFLTLPLFIRRRIAARMRAGSKAANSSKSLDIMDVNAQTVVAEMEKHRVQWLIHGHTHRPAVHELSANDQPAFRVVLGAWHHEGSMVKVTPDNVELIAFPL.

Mn(2+)-binding residues include aspartate 8, histidine 10, aspartate 41, asparagine 79, and histidine 114. Asparagine 79–arginine 80 contributes to the substrate binding site. Substrate is bound by residues aspartate 122, serine 160, asparagine 164, lysine 167, and histidine 195. Mn(2+)-binding residues include histidine 195 and histidine 197.

This sequence belongs to the LpxH family. Requires Mn(2+) as cofactor.

Its subcellular location is the cell inner membrane. The enzyme catalyses UDP-2-N,3-O-bis[(3R)-3-hydroxytetradecanoyl]-alpha-D-glucosamine + H2O = 2-N,3-O-bis[(3R)-3-hydroxytetradecanoyl]-alpha-D-glucosaminyl 1-phosphate + UMP + 2 H(+). It participates in glycolipid biosynthesis; lipid IV(A) biosynthesis; lipid IV(A) from (3R)-3-hydroxytetradecanoyl-[acyl-carrier-protein] and UDP-N-acetyl-alpha-D-glucosamine: step 4/6. Its function is as follows. Hydrolyzes the pyrophosphate bond of UDP-2,3-diacylglucosamine to yield 2,3-diacylglucosamine 1-phosphate (lipid X) and UMP by catalyzing the attack of water at the alpha-P atom. Involved in the biosynthesis of lipid A, a phosphorylated glycolipid that anchors the lipopolysaccharide to the outer membrane of the cell. This is UDP-2,3-diacylglucosamine hydrolase from Salmonella newport (strain SL254).